Reading from the N-terminus, the 222-residue chain is Histidine biosynthesis bifunctional protein HisIE (222 aa).

Residues 1 to 128 are phosphoribosyl-AMP cyclohydrolase; sequence MQPLSPAFID…SLTLPPPMDA (128 aa). The phosphoribosyl-ATP pyrophosphohydrolase stretch occupies residues 129–222; that stretch reads CSELFRVIDQ…ANRRGAPRRN (94 aa).

The protein in the N-terminal section; belongs to the PRA-CH family. This sequence in the C-terminal section; belongs to the PRA-PH family.

It localises to the cytoplasm. It carries out the reaction 1-(5-phospho-beta-D-ribosyl)-ATP + H2O = 1-(5-phospho-beta-D-ribosyl)-5'-AMP + diphosphate + H(+). It catalyses the reaction 1-(5-phospho-beta-D-ribosyl)-5'-AMP + H2O = 1-(5-phospho-beta-D-ribosyl)-5-[(5-phospho-beta-D-ribosylamino)methylideneamino]imidazole-4-carboxamide. The protein operates within amino-acid biosynthesis; L-histidine biosynthesis; L-histidine from 5-phospho-alpha-D-ribose 1-diphosphate: step 2/9. It participates in amino-acid biosynthesis; L-histidine biosynthesis; L-histidine from 5-phospho-alpha-D-ribose 1-diphosphate: step 3/9. This chain is Histidine biosynthesis bifunctional protein HisIE, found in Prochlorococcus marinus (strain MIT 9313).